The primary structure comprises 495 residues: RNA-binding KH domain-containing protein PEPPER (495 aa).

3 consecutive KH domains span residues 73 to 140 (DCVF…MDAV), 165 to 234 (FSSV…LEAI), and 340 to 403 (QVSQ…EQLI). Residues 474 to 495 (GQTYGSEYRPASDVGGYSSYNL) are disordered.

Interacts with HUA1 and HEN4. As to expression, detected in roots, shoots, leaves, flowers and fruits.

The protein localises to the nucleus. Functionally, regulates vegetative and gynoecium development. In concert with HUA2, antagonizes FLK by positively regulating FLC probably at transcriptional and post-transcriptional levels, and thus acts as a negative regulator of flowering. The sequence is that of RNA-binding KH domain-containing protein PEPPER from Arabidopsis thaliana (Mouse-ear cress).